Reading from the N-terminus, the 193-residue chain is Potassium-transporting ATPase KdpC subunit (193 aa).

The helical transmembrane segment at 9–29 threads the bilayer; it reads VLMTVVTTVLLGLVYPLLITG.

The protein belongs to the KdpC family. The system is composed of three essential subunits: KdpA, KdpB and KdpC.

The protein localises to the cell inner membrane. Part of the high-affinity ATP-driven potassium transport (or Kdp) system, which catalyzes the hydrolysis of ATP coupled with the electrogenic transport of potassium into the cytoplasm. This subunit acts as a catalytic chaperone that increases the ATP-binding affinity of the ATP-hydrolyzing subunit KdpB by the formation of a transient KdpB/KdpC/ATP ternary complex. The polypeptide is Potassium-transporting ATPase KdpC subunit (Koribacter versatilis (strain Ellin345)).